Here is a 362-residue protein sequence, read N- to C-terminus: Histidinol-phosphate aminotransferase (362 aa).

K220 carries the N6-(pyridoxal phosphate)lysine modification.

The protein belongs to the class-II pyridoxal-phosphate-dependent aminotransferase family. Histidinol-phosphate aminotransferase subfamily. In terms of assembly, homodimer. The cofactor is pyridoxal 5'-phosphate.

It carries out the reaction L-histidinol phosphate + 2-oxoglutarate = 3-(imidazol-4-yl)-2-oxopropyl phosphate + L-glutamate. It participates in amino-acid biosynthesis; L-histidine biosynthesis; L-histidine from 5-phospho-alpha-D-ribose 1-diphosphate: step 7/9. The sequence is that of Histidinol-phosphate aminotransferase from Rhodospirillum centenum (strain ATCC 51521 / SW).